The following is a 500-amino-acid chain: Lysine--tRNA ligase (500 aa).

Residues glutamate 410 and glutamate 417 each contribute to the Mg(2+) site.

This sequence belongs to the class-II aminoacyl-tRNA synthetase family. As to quaternary structure, homodimer. Requires Mg(2+) as cofactor.

The protein resides in the cytoplasm. It carries out the reaction tRNA(Lys) + L-lysine + ATP = L-lysyl-tRNA(Lys) + AMP + diphosphate. The polypeptide is Lysine--tRNA ligase (Mycoplasma capricolum subsp. capricolum (strain California kid / ATCC 27343 / NCTC 10154)).